A 142-amino-acid polypeptide reads, in one-letter code: uncharacterized protein (142 aa).

The protein resides in the mitochondrion. This is an uncharacterized protein from Mus musculus (Mouse).